Consider the following 271-residue polypeptide: 3-methyl-2-oxobutanoate hydroxymethyltransferase (271 aa).

The Mg(2+) site is built by Asp53 and Asp92. Residues 53-54 (DS), Asp92, and Lys120 each bind 3-methyl-2-oxobutanoate. Mg(2+) is bound at residue Glu122. Catalysis depends on Glu189, which acts as the Proton acceptor.

Belongs to the PanB family. As to quaternary structure, homodecamer; pentamer of dimers. Requires Mg(2+) as cofactor.

The protein resides in the cytoplasm. It carries out the reaction 3-methyl-2-oxobutanoate + (6R)-5,10-methylene-5,6,7,8-tetrahydrofolate + H2O = 2-dehydropantoate + (6S)-5,6,7,8-tetrahydrofolate. It participates in cofactor biosynthesis; (R)-pantothenate biosynthesis; (R)-pantoate from 3-methyl-2-oxobutanoate: step 1/2. Functionally, catalyzes the reversible reaction in which hydroxymethyl group from 5,10-methylenetetrahydrofolate is transferred onto alpha-ketoisovalerate to form ketopantoate. This Burkholderia mallei (strain NCTC 10247) protein is 3-methyl-2-oxobutanoate hydroxymethyltransferase.